Reading from the N-terminus, the 380-residue chain is Protein arginine N-methyltransferase PRMT10 (380 aa).

The region spanning 26–357 (EVDFANYFCT…KENHRLMDME (332 aa)) is the SAM-dependent MTase PRMT-type domain. Residues Gln42, Arg51, Gly75, Glu97, and Glu126 each contribute to the S-adenosyl-L-methionine site. Residues Glu140 and Glu149 contribute to the active site. Residues 187 to 227 (ENKMEDLEIAMHDWNLFVEDTESYYGVNMNVLTKAYRAEHE) form a dimerization arm region.

The protein belongs to the class I-like SAM-binding methyltransferase superfamily. Protein arginine N-methyltransferase family. In terms of assembly, ring-like homodimer.

The enzyme catalyses L-arginyl-[protein] + 2 S-adenosyl-L-methionine = N(omega),N(omega)-dimethyl-L-arginyl-[protein] + 2 S-adenosyl-L-homocysteine + 2 H(+). Methylates (mono and asymmetric dimethylation) the guanidino nitrogens of arginyl residues in some proteins. In Oryza sativa subsp. japonica (Rice), this protein is Protein arginine N-methyltransferase PRMT10 (PRMT10).